The chain runs to 238 residues: Large ribosomal subunit protein uL1 (238 aa).

The protein belongs to the universal ribosomal protein uL1 family. Part of the 50S ribosomal subunit.

Its function is as follows. Binds directly to 23S rRNA. The L1 stalk is quite mobile in the ribosome, and is involved in E site tRNA release. Functionally, protein L1 is also a translational repressor protein, it controls the translation of the L11 operon by binding to its mRNA. The protein is Large ribosomal subunit protein uL1 of Picosynechococcus sp. (strain ATCC 27264 / PCC 7002 / PR-6) (Agmenellum quadruplicatum).